The primary structure comprises 620 residues: PAN2-PAN3 deadenylation complex subunit PAN3 (620 aa).

The C3H1-type zinc-finger motif lies at 7 to 36 (SAKGTLCKNILIYGYCKYENKGCAFSHRRN). 2 disordered regions span residues 39–73 (ANSG…QPST) and 95–168 (VFVP…QPGP). 2 stretches are compositionally biased toward polar residues: residues 63 to 73 (NVNTPSFQPST) and 101 to 126 (TPAS…TVSN). Residues 226-482 (QSYPGGPEIV…LESYIRKHLA (257 aa)) form a pseudokinase domain region. ATP contacts are provided by residues Arg-274, 323 to 330 (DYYPNAST), and 380 to 381 (SK). Residues 483-521 (IRLLDVVDMLEDSNDYLESQLSTELENARLVRLMTKINF) adopt a coiled-coil conformation. The segment at 522-620 (IVDRPEWDNE…SVFRTITRGK (99 aa)) is knob domain.

This sequence belongs to the protein kinase superfamily. PAN3 family. As to quaternary structure, homodimer. Forms a heterotrimer with a catalytic subunit PAN2 to form the poly(A)-nuclease (PAN) deadenylation complex. Interacts (via PAM-2 motif) with poly(A)-binding protein PAB1 (via PABC domain), conferring substrate specificity of the enzyme complex.

The protein localises to the cytoplasm. Functionally, regulatory subunit of the poly(A)-nuclease (PAN) deadenylation complex, one of two cytoplasmic mRNA deadenylases involved in mRNA turnover. PAN specifically shortens poly(A) tails of RNA and the activity is stimulated by poly(A)-binding protein PAB1. PAN deadenylation is followed by rapid degradation of the shortened mRNA tails by the CCR4-NOT complex. Deadenylated mRNAs are then degraded by two alternative mechanisms, namely exosome-mediated 3'-5' exonucleolytic degradation, or deadenylation-dependent mRNA decaping and subsequent 5'-3' exonucleolytic degradation by XRN1. May also be involved in post-transcriptional maturation of mRNA poly(A) tails. PAN3 acts as a positive regulator for PAN activity, recruiting the catalytic subunit PAN2 to mRNA via its interaction with RNA and with PAB1. This Meyerozyma guilliermondii (strain ATCC 6260 / CBS 566 / DSM 6381 / JCM 1539 / NBRC 10279 / NRRL Y-324) (Yeast) protein is PAN2-PAN3 deadenylation complex subunit PAN3.